The chain runs to 496 residues: Aldehyde dehydrogenase (496 aa).

Active-site residues include Glu-263 and Cys-296.

This sequence belongs to the aldehyde dehydrogenase family.

It localises to the cytoplasm. The enzyme catalyses an aldehyde + NAD(+) + H2O = a carboxylate + NADH + 2 H(+). The sequence is that of Aldehyde dehydrogenase (CLAH10) from Davidiella tassiana (Mycosphaerella tassiana).